Reading from the N-terminus, the 277-residue chain is tRNA U34 carboxymethyltransferase (277 aa).

Carboxy-S-adenosyl-L-methionine is bound by residues Lys46, Trp60, Lys65, Gly84, 106-108 (DPS), 133-134 (VE), Tyr153, and Arg268.

This sequence belongs to the class I-like SAM-binding methyltransferase superfamily. CmoB family. In terms of assembly, homotetramer.

The catalysed reaction is carboxy-S-adenosyl-L-methionine + 5-hydroxyuridine(34) in tRNA = 5-carboxymethoxyuridine(34) in tRNA + S-adenosyl-L-homocysteine + H(+). Catalyzes carboxymethyl transfer from carboxy-S-adenosyl-L-methionine (Cx-SAM) to 5-hydroxyuridine (ho5U) to form 5-carboxymethoxyuridine (cmo5U) at position 34 in tRNAs. This is tRNA U34 carboxymethyltransferase from Wolinella succinogenes (strain ATCC 29543 / DSM 1740 / CCUG 13145 / JCM 31913 / LMG 7466 / NCTC 11488 / FDC 602W) (Vibrio succinogenes).